A 299-amino-acid polypeptide reads, in one-letter code: 4-hydroxy-tetrahydrodipicolinate synthase (299 aa).

T45 contacts pyruvate. The active-site Proton donor/acceptor is the Y133. Residue K161 is the Schiff-base intermediate with substrate of the active site. Residue I203 participates in pyruvate binding.

It belongs to the DapA family. As to quaternary structure, homotetramer; dimer of dimers.

Its subcellular location is the cytoplasm. It carries out the reaction L-aspartate 4-semialdehyde + pyruvate = (2S,4S)-4-hydroxy-2,3,4,5-tetrahydrodipicolinate + H2O + H(+). The protein operates within amino-acid biosynthesis; L-lysine biosynthesis via DAP pathway; (S)-tetrahydrodipicolinate from L-aspartate: step 3/4. Functionally, catalyzes the condensation of (S)-aspartate-beta-semialdehyde [(S)-ASA] and pyruvate to 4-hydroxy-tetrahydrodipicolinate (HTPA). The protein is 4-hydroxy-tetrahydrodipicolinate synthase of Blochmanniella pennsylvanica (strain BPEN).